A 344-amino-acid polypeptide reads, in one-letter code: 3-isopropylmalate dehydrogenase (344 aa).

74 to 87 contacts NAD(+); that stretch reads GPKWDALPRKIRPE. The substrate site is built by arginine 94, arginine 104, arginine 132, and aspartate 217. Mg(2+) is bound by residues aspartate 217, aspartate 241, and aspartate 245. 274–286 is a binding site for NAD(+); that stretch reads GSAPDIAGKGIAN.

It belongs to the isocitrate and isopropylmalate dehydrogenases family. LeuB type 1 subfamily. As to quaternary structure, homodimer. It depends on Mg(2+) as a cofactor. The cofactor is Mn(2+).

It localises to the cytoplasm. It catalyses the reaction (2R,3S)-3-isopropylmalate + NAD(+) = 4-methyl-2-oxopentanoate + CO2 + NADH. Its pathway is amino-acid biosynthesis; L-leucine biosynthesis; L-leucine from 3-methyl-2-oxobutanoate: step 3/4. Functionally, catalyzes the oxidation of 3-carboxy-2-hydroxy-4-methylpentanoate (3-isopropylmalate) to 3-carboxy-4-methyl-2-oxopentanoate. The product decarboxylates to 4-methyl-2 oxopentanoate. The chain is 3-isopropylmalate dehydrogenase (leuB) from Thermus aquaticus.